Consider the following 286-residue polypeptide: Shikimate dehydrogenase (NADP(+)) (286 aa).

Shikimate contacts are provided by residues 25–27 (SLS) and threonine 72. Lysine 76 acts as the Proton acceptor in catalysis. Glutamate 88 lines the NADP(+) pocket. Positions 97 and 113 each coordinate shikimate. NADP(+) is bound by residues 138–142 (GSGGA), 162–167 (NRTIER), and isoleucine 232. A shikimate-binding site is contributed by tyrosine 234. Position 255 (glycine 255) interacts with NADP(+).

It belongs to the shikimate dehydrogenase family. As to quaternary structure, homodimer.

The enzyme catalyses shikimate + NADP(+) = 3-dehydroshikimate + NADPH + H(+). Its pathway is metabolic intermediate biosynthesis; chorismate biosynthesis; chorismate from D-erythrose 4-phosphate and phosphoenolpyruvate: step 4/7. Functionally, involved in the biosynthesis of the chorismate, which leads to the biosynthesis of aromatic amino acids. Catalyzes the reversible NADPH linked reduction of 3-dehydroshikimate (DHSA) to yield shikimate (SA). This chain is Shikimate dehydrogenase (NADP(+)), found in Magnetococcus marinus (strain ATCC BAA-1437 / JCM 17883 / MC-1).